Consider the following 734-residue polypeptide: Probable carboxypeptidase X1 (734 aa).

The signal sequence occupies residues 1–20 (MWGLLLALAAFAPAVGPALG). The segment at 30 to 62 (AQPGTTKVPGSTPALHSSPAQPPAETANGTSEQ) is disordered. Residues 32 to 48 (PGTTKVPGSTPALHSSP) are compositionally biased toward polar residues. N-linked (GlcNAc...) asparagine glycosylation is found at Asn-57, Asn-210, Asn-220, and Asn-318. Residues 113-274 (TGCPPLGLES…PCLRAEILAC (162 aa)) enclose the F5/8 type C domain. Cys-115 and Cys-274 are oxidised to a cystine. One can recognise a Peptidase M14 domain in the interval 298 to 621 (QHHNYKAMRK…DALLTYLEQV (324 aa)). The Zn(2+) site is built by His-360 and Glu-363. Asn-428 and Asn-472 each carry an N-linked (GlcNAc...) asparagine glycan. Zn(2+) is bound at residue His-498. The Proton donor/acceptor role is filled by Glu-591.

The protein belongs to the peptidase M14 family. Requires Zn(2+) as cofactor.

The protein localises to the secreted. May be involved in cell-cell interactions. No carboxypeptidase activity was found yet. This chain is Probable carboxypeptidase X1 (CPXM1), found in Homo sapiens (Human).